A 350-amino-acid chain; its full sequence is MKKIRLELVYLRAIICAIIIVTHLLTQITLKHENMEGGSLVLQFYIRNIVIFGTPCFIILSQLLTTLNYQKVTYRYLTTRVKYILIPYILMGLFYSYSESLLTDTSFQKQFIENVLLGQWYGYFIVVIMQFFILSYIIFKINYNLFNSKILLLLSFILQQSFLYYFTNNTAFHDTVLHYYPLSENTIIFGWIFYFFLGAYMGYNYERVLNFLERYLVIMIVLAVATYFVFIALANGDYWNVTSFSYSLTPYNSIMFIVILGICTHFKTMLFNTIQMISAFSFFIYLLHPIILDSLFAYTNIFEDNTMVFLAISLLFILGLCIGVGMILREFYIFRFIIGKQPYKLNINAY.

10 helical membrane-spanning segments follow: residues 7-29, 44-66, 79-101, 116-138, 145-167, 187-204, 211-233, 243-262, 269-291, and 306-328; these read ELVYLRAIICAIIIVTHLLTQIT, FYIRNIVIFGTPCFIILSQLLTT, TRVKYILIPYILMGLFYSYSESL, LLGQWYGYFIVVIMQFFILSYII, LFNSKILLLLSFILQQSFLYYFT, IIFGWIFYFFLGAYMGYN, FLERYLVIMIVLAVATYFVFIAL, SFSYSLTPYNSIMFIVILGI, MLFNTIQMISAFSFFIYLLHPII, and TMVFLAISLLFILGLCIGVGMIL.

Belongs to the acyltransferase 3 family.

The protein localises to the cell membrane. In terms of biological role, presumably involved in the export of the biofilm adhesin polysaccharide poly-beta-1,6-N-acetyl-D-glucosamine (PNAG, also referred to as PIA) across the cell membrane. The protein is Probable poly-beta-1,6-N-acetyl-D-glucosamine export protein (icaC) of Staphylococcus aureus (strain MRSA252).